Here is a 401-residue protein sequence, read N- to C-terminus: uncharacterized protein (401 aa).

Transmembrane regions (helical) follow at residues 20-40, 49-69, 83-100, 104-121, 140-160, 167-187, 207-227, 248-268, 289-309, and 357-377; these read FFGELLTSLTGAMMGPFMVLY, IMMPMLIISLQPFADIFLTLA, ILTALLLQSAAMTGFVFA, YVFAILYVMNGIGRSLYI, VFAVINAIYSTGLTAGPLVGM, PVWIFALDAAALFIYFLIAAL, FTIYRPVLLLLLLSLPISMLY, MLTIYSAAKALFSCVLQVPLV, LAAAGFACSTSLTMLLVTAAV, and GLILTSFGGEVIFYALAVCLL.

It belongs to the major facilitator superfamily.

It is found in the cell membrane. This is an uncharacterized protein from Bacillus subtilis (strain 168).